A 175-amino-acid chain; its full sequence is Protein OPG036 (175 aa).

Belongs to the poxviridae OPG036 family.

The protein localises to the host nucleus. Its function is as follows. Plays a role in the inhibition of host innate immune response. Within the host nucleus, inhibits activation of interferon-beta promoter by inhibiting IRF3 activation. This chain is Protein OPG036 (OPG036), found in Homo sapiens (Human).